The primary structure comprises 545 residues: Glucose-6-phosphate isomerase (545 aa).

Catalysis depends on glutamate 351, which acts as the Proton donor. Catalysis depends on residues histidine 382 and lysine 510.

This sequence belongs to the GPI family.

Its subcellular location is the cytoplasm. It carries out the reaction alpha-D-glucose 6-phosphate = beta-D-fructose 6-phosphate. It participates in carbohydrate biosynthesis; gluconeogenesis. It functions in the pathway carbohydrate degradation; glycolysis; D-glyceraldehyde 3-phosphate and glycerone phosphate from D-glucose: step 2/4. In terms of biological role, catalyzes the reversible isomerization of glucose-6-phosphate to fructose-6-phosphate. This chain is Glucose-6-phosphate isomerase, found in Shewanella baltica (strain OS223).